Consider the following 362-residue polypeptide: Ferredoxin--NADP reductase, leaf-type isozyme, chloroplastic (362 aa).

The interval 1-20 (MATAVSAAVSLPSSKSTSFS) is disordered. The N-terminal 62 residues, 1-62 (MATAVSAAVS…RAQVTTEAPA (62 aa)), are a transit peptide targeting the chloroplast. A compositionally biased stretch (low complexity) spans 10–20 (SLPSSKSTSFS). The region spanning 83–205 (KEPYVGRCLL…TGPVGKEMLM (123 aa)) is the FAD-binding FR-type domain. Residues 141–144 (RLYS), 162–164 (CVK), tyrosine 168, 179–181 (VCS), and threonine 220 each bind FAD. Residues serine 144 and lysine 164 each coordinate NADP(+). NADP(+)-binding positions include threonine 220, 252–253 (VP), 282–283 (SR), lysine 292, 321–322 (GL), and glutamate 360.

Belongs to the ferredoxin--NADP reductase type 1 family. It depends on FAD as a cofactor.

The protein localises to the plastid. Its subcellular location is the chloroplast stroma. The protein resides in the chloroplast thylakoid membrane. It carries out the reaction 2 reduced [2Fe-2S]-[ferredoxin] + NADP(+) + H(+) = 2 oxidized [2Fe-2S]-[ferredoxin] + NADPH. Its pathway is energy metabolism; photosynthesis. May play a key role in regulating the relative amounts of cyclic and non-cyclic electron flow to meet the demands of the plant for ATP and reducing power. This chain is Ferredoxin--NADP reductase, leaf-type isozyme, chloroplastic (PETH), found in Nicotiana tabacum (Common tobacco).